The sequence spans 207 residues: 3-isopropylmalate dehydratase small subunit (207 aa).

This sequence belongs to the LeuD family. LeuD type 1 subfamily. Heterodimer of LeuC and LeuD.

The enzyme catalyses (2R,3S)-3-isopropylmalate = (2S)-2-isopropylmalate. Its pathway is amino-acid biosynthesis; L-leucine biosynthesis; L-leucine from 3-methyl-2-oxobutanoate: step 2/4. In terms of biological role, catalyzes the isomerization between 2-isopropylmalate and 3-isopropylmalate, via the formation of 2-isopropylmaleate. The polypeptide is 3-isopropylmalate dehydratase small subunit (Acidithiobacillus ferrooxidans (strain ATCC 23270 / DSM 14882 / CIP 104768 / NCIMB 8455) (Ferrobacillus ferrooxidans (strain ATCC 23270))).